The following is a 711-amino-acid chain: DNA topoisomerase 3 (711 aa).

The 134-residue stretch at 2–135 (KSLILAEKPS…LRRLWISSVT (134 aa)) folds into the Toprim domain. Mg(2+)-binding residues include Glu8 and Asp104. In terms of domain architecture, Topo IA-type catalytic spans 152-580 (YNDLYYAALA…EMKDFTKDVV (429 aa)). Residues 186-191 (SLGRVQ) are interaction with DNA. The O-(5'-phospho-DNA)-tyrosine intermediate role is filled by Tyr305. Residues 691 to 711 (MNKNEGLDNNPFKDALKNLNL) are disordered.

The protein belongs to the type IA topoisomerase family. Mg(2+) is required as a cofactor.

It catalyses the reaction ATP-independent breakage of single-stranded DNA, followed by passage and rejoining.. Releases the supercoiling and torsional tension of DNA, which is introduced during the DNA replication and transcription, by transiently cleaving and rejoining one strand of the DNA duplex. Introduces a single-strand break via transesterification at a target site in duplex DNA. The scissile phosphodiester is attacked by the catalytic tyrosine of the enzyme, resulting in the formation of a DNA-(5'-phosphotyrosyl)-enzyme intermediate and the expulsion of a 3'-OH DNA strand. The free DNA strand then undergoes passage around the unbroken strand, thus removing DNA supercoils. Finally, in the religation step, the DNA 3'-OH attacks the covalent intermediate to expel the active-site tyrosine and restore the DNA phosphodiester backbone. In Staphylococcus aureus (strain MRSA252), this protein is DNA topoisomerase 3.